Here is a 265-residue protein sequence, read N- to C-terminus: Glycine/sarcosine N-methyltransferase (265 aa).

S-adenosyl-L-methionine contacts are provided by residues Tyr-28, Trp-36, Arg-45, Ala-69, Asp-90, 116 to 117 (DW), and Leu-134. 3 residues coordinate substrate: Asn-136, Arg-169, and Tyr-208.

It belongs to the class I-like SAM-binding methyltransferase superfamily. Glycine N-methyltransferase family. In terms of assembly, monomer.

The catalysed reaction is glycine + 2 S-adenosyl-L-methionine = N,N-dimethylglycine + 2 S-adenosyl-L-homocysteine + 2 H(+). The enzyme catalyses glycine + S-adenosyl-L-methionine = sarcosine + S-adenosyl-L-homocysteine + H(+). It carries out the reaction sarcosine + S-adenosyl-L-methionine = N,N-dimethylglycine + S-adenosyl-L-homocysteine + H(+). It functions in the pathway amine and polyamine biosynthesis; betaine biosynthesis via glycine pathway; betaine from glycine: step 1/3. It participates in amine and polyamine biosynthesis; betaine biosynthesis via glycine pathway; betaine from glycine: step 2/3. Its activity is regulated as follows. Inhibited by acetate, dimethylglycine and S-adenosyl-L-homocysteine. Its function is as follows. Catalyzes the methylation of glycine and sarcosine to sarcosine and dimethylglycine, respectively, with S-adenosylmethionine (AdoMet) acting as the methyl donor. In Aphanothece halophytica, this protein is Glycine/sarcosine N-methyltransferase.